The primary structure comprises 171 residues: Large ribosomal subunit protein uL15 (171 aa).

Polar residues predominate over residues 1–10 (MKLNEISDNN). Disordered stretches follow at residues 1–44 (MKLN…RSGV) and 150–171 (LPEA…NKAK). Positions 21 to 35 (RGIGSGKGKTAGRGQ) are enriched in gly residues. Basic and acidic residues predominate over residues 157-171 (EQEKKAARREANKAK).

It belongs to the universal ribosomal protein uL15 family. In terms of assembly, part of the 50S ribosomal subunit.

Binds to the 23S rRNA. This is Large ribosomal subunit protein uL15 from Novosphingobium aromaticivorans (strain ATCC 700278 / DSM 12444 / CCUG 56034 / CIP 105152 / NBRC 16084 / F199).